A 124-amino-acid chain; its full sequence is Large ribosomal subunit protein bL12 (124 aa).

Belongs to the bacterial ribosomal protein bL12 family. Homodimer. Part of the ribosomal stalk of the 50S ribosomal subunit. Forms a multimeric L10(L12)X complex, where L10 forms an elongated spine to which 2 to 4 L12 dimers bind in a sequential fashion. Binds GTP-bound translation factors.

In terms of biological role, forms part of the ribosomal stalk which helps the ribosome interact with GTP-bound translation factors. Is thus essential for accurate translation. The protein is Large ribosomal subunit protein bL12 of Wolinella succinogenes (strain ATCC 29543 / DSM 1740 / CCUG 13145 / JCM 31913 / LMG 7466 / NCTC 11488 / FDC 602W) (Vibrio succinogenes).